Consider the following 466-residue polypeptide: ATP synthase subunit beta (466 aa).

Residue 152–159 (GGAGVGKT) coordinates ATP.

Belongs to the ATPase alpha/beta chains family. In terms of assembly, F-type ATPases have 2 components, CF(1) - the catalytic core - and CF(0) - the membrane proton channel. CF(1) has five subunits: alpha(3), beta(3), gamma(1), delta(1), epsilon(1). CF(0) has three main subunits: a(1), b(2) and c(9-12). The alpha and beta chains form an alternating ring which encloses part of the gamma chain. CF(1) is attached to CF(0) by a central stalk formed by the gamma and epsilon chains, while a peripheral stalk is formed by the delta and b chains.

It is found in the cell inner membrane. It carries out the reaction ATP + H2O + 4 H(+)(in) = ADP + phosphate + 5 H(+)(out). In terms of biological role, produces ATP from ADP in the presence of a proton gradient across the membrane. The catalytic sites are hosted primarily by the beta subunits. The chain is ATP synthase subunit beta from Helicobacter pylori (strain HPAG1).